The following is a 251-amino-acid chain: Small ribosomal subunit protein uS2 (251 aa).

It belongs to the universal ribosomal protein uS2 family.

This chain is Small ribosomal subunit protein uS2 (rpsB), found in Arthrospira platensis (Spirulina platensis).